The sequence spans 474 residues: Glutamyl-tRNA(Gln) amidotransferase subunit A (474 aa).

Catalysis depends on charge relay system residues Lys-76 and Ser-151. Ser-175 serves as the catalytic Acyl-ester intermediate.

The protein belongs to the amidase family. GatA subfamily. In terms of assembly, heterotrimer of A, B and C subunits.

It carries out the reaction L-glutamyl-tRNA(Gln) + L-glutamine + ATP + H2O = L-glutaminyl-tRNA(Gln) + L-glutamate + ADP + phosphate + H(+). Functionally, allows the formation of correctly charged Gln-tRNA(Gln) through the transamidation of misacylated Glu-tRNA(Gln) in organisms which lack glutaminyl-tRNA synthetase. The reaction takes place in the presence of glutamine and ATP through an activated gamma-phospho-Glu-tRNA(Gln). The protein is Glutamyl-tRNA(Gln) amidotransferase subunit A of Chlorobium limicola (strain DSM 245 / NBRC 103803 / 6330).